The chain runs to 175 residues: Cuticle protein 16.5, isoform A (175 aa).

19 consecutive repeat copies span residues 17-20, 25-28, 31-34, 38-41, 44-47, 51-54, 57-60, 64-67, 70-73, 77-80, 83-86, 91-94, 99-102, 106-109, 134-137, 144-147, 151-154, 158-161, and 165-168.

Component of the cuticle of migratory locust which contains more than 100 different structural proteins. The sequence is that of Cuticle protein 16.5, isoform A from Locusta migratoria (Migratory locust).